The primary structure comprises 800 residues: Phenylalanine--tRNA ligase beta subunit (800 aa).

A tRNA-binding domain is found at 39–154 (TKDIKNLVVG…EAQVPGTDAL (116 aa)). In terms of domain architecture, B5 spans 408–483 (AFITPIDITA…RIYGYDDIPS (76 aa)). Residues aspartate 461, aspartate 467, glutamate 470, and glutamate 471 each coordinate Mg(2+). Positions 708–800 (PRFPGMSRDI…ALIEQGAVIR (93 aa)) constitute an FDX-ACB domain.

It belongs to the phenylalanyl-tRNA synthetase beta subunit family. Type 1 subfamily. As to quaternary structure, tetramer of two alpha and two beta subunits. It depends on Mg(2+) as a cofactor.

It localises to the cytoplasm. It catalyses the reaction tRNA(Phe) + L-phenylalanine + ATP = L-phenylalanyl-tRNA(Phe) + AMP + diphosphate + H(+). This is Phenylalanine--tRNA ligase beta subunit from Staphylococcus aureus (strain COL).